The primary structure comprises 146 residues: UPF0260 protein Sama_1927 (146 aa).

The protein belongs to the UPF0260 family.

This is UPF0260 protein Sama_1927 from Shewanella amazonensis (strain ATCC BAA-1098 / SB2B).